Reading from the N-terminus, the 514-residue chain is Threonine synthase (514 aa).

Residue lysine 117 is modified to N6-(pyridoxal phosphate)lysine. Glycine 270, asparagine 271, phenylalanine 272, and aspartate 274 together coordinate pyridoxal 5'-phosphate. 2 positions are modified to phosphoserine: serine 319 and serine 321. Threonine 449 contributes to the pyridoxal 5'-phosphate binding site.

This sequence belongs to the threonine synthase family. Pyridoxal 5'-phosphate serves as cofactor.

The enzyme catalyses O-phospho-L-homoserine + H2O = L-threonine + phosphate. It functions in the pathway amino-acid biosynthesis; L-threonine biosynthesis; L-threonine from L-aspartate: step 5/5. Functionally, catalyzes the gamma-elimination of phosphate from L-phosphohomoserine and the beta-addition of water to produce L-threonine. The chain is Threonine synthase (thrc) from Schizosaccharomyces pombe (strain 972 / ATCC 24843) (Fission yeast).